The sequence spans 298 residues: Diphthine methyl ester synthase (298 aa).

S-adenosyl-L-methionine-binding positions include Leu-9, Asp-85, Gly-88, 113-114, Leu-164, Leu-222, and His-247; that span reads SV.

This sequence belongs to the diphthine synthase family.

The protein resides in the cytoplasm. The enzyme catalyses 2-[(3S)-amino-3-carboxypropyl]-L-histidyl-[translation elongation factor 2] + 4 S-adenosyl-L-methionine = diphthine methyl ester-[translation elongation factor 2] + 4 S-adenosyl-L-homocysteine + 3 H(+). It functions in the pathway protein modification; peptidyl-diphthamide biosynthesis. Functionally, S-adenosyl-L-methionine-dependent methyltransferase that catalyzes four methylations of the modified target histidine residue in translation elongation factor 2 (EF-2), to form an intermediate called diphthine methyl ester. The four successive methylation reactions represent the second step of diphthamide biosynthesis. The protein is Diphthine methyl ester synthase (DPH5) of Candida glabrata (strain ATCC 2001 / BCRC 20586 / JCM 3761 / NBRC 0622 / NRRL Y-65 / CBS 138) (Yeast).